We begin with the raw amino-acid sequence, 466 residues long: ATP synthase subunit beta (466 aa).

An ATP-binding site is contributed by G153–T160.

Belongs to the ATPase alpha/beta chains family. As to quaternary structure, F-type ATPases have 2 components, CF(1) - the catalytic core - and CF(0) - the membrane proton channel. CF(1) has five subunits: alpha(3), beta(3), gamma(1), delta(1), epsilon(1). CF(0) has three main subunits: a(1), b(2) and c(9-12). The alpha and beta chains form an alternating ring which encloses part of the gamma chain. CF(1) is attached to CF(0) by a central stalk formed by the gamma and epsilon chains, while a peripheral stalk is formed by the delta and b chains.

It localises to the cell membrane. The catalysed reaction is ATP + H2O + 4 H(+)(in) = ADP + phosphate + 5 H(+)(out). Produces ATP from ADP in the presence of a proton gradient across the membrane. The catalytic sites are hosted primarily by the beta subunits. The polypeptide is ATP synthase subunit beta (Oenococcus oeni (strain ATCC BAA-331 / PSU-1)).